We begin with the raw amino-acid sequence, 172 residues long: Phosphopantetheine adenylyltransferase (172 aa).

T14 contacts substrate. ATP-binding positions include 14–15 (TF) and H22. Substrate-binding residues include K46, L78, and R92. ATP is bound by residues 93-95 (GLR), E103, and 128-134 (WLYISST).

It belongs to the bacterial CoaD family. In terms of assembly, homohexamer. Mg(2+) serves as cofactor.

It is found in the cytoplasm. The catalysed reaction is (R)-4'-phosphopantetheine + ATP + H(+) = 3'-dephospho-CoA + diphosphate. Its pathway is cofactor biosynthesis; coenzyme A biosynthesis; CoA from (R)-pantothenate: step 4/5. In terms of biological role, reversibly transfers an adenylyl group from ATP to 4'-phosphopantetheine, yielding dephospho-CoA (dPCoA) and pyrophosphate. This is Phosphopantetheine adenylyltransferase from Lawsonia intracellularis (strain PHE/MN1-00).